The primary structure comprises 485 residues: ATP-dependent rRNA helicase RRP3 (485 aa).

Residues 1–10 show a composition bias toward basic residues; it reads MPVLKKRKLA. The interval 1-55 is disordered; the sequence is MPVLKKRKLAHTAQPDPIVSDLESSSSEASQQSHDEQLTAANEQDDESPQVQREE. Over residues 20-32 the composition is skewed to low complexity; it reads SDLESSSSEASQQ. A Q motif motif is present at residues 59 to 87; sequence KSFKDLGIIDSLCEACEALGYKSPTPIQA. The Helicase ATP-binding domain occupies 90 to 261; that stretch reads IPLALQGRDL…RASLSNPLRV (172 aa). 103 to 110 contributes to the ATP binding site; sequence AETGSGKT. The short motif at 209–212 is the DEAD box element; sequence DEAD. One can recognise a Helicase C-terminal domain in the interval 285–433; it reads YKDIYLVYLL…EYKVEKEEVM (149 aa). Residues 449 to 458 are compositionally biased toward basic and acidic residues; the sequence is EMKDLHEKRG. A disordered region spans residues 449 to 485; that stretch reads EMKDLHEKRGSRGATLKGRRPAKGAKRGRDEMDREEG. Residues 465 to 474 show a composition bias toward basic residues; the sequence is KGRRPAKGAK. Basic and acidic residues predominate over residues 475–485; that stretch reads RGRDEMDREEG.

The protein belongs to the DEAD box helicase family. DDX47/RRP3 subfamily. Interacts with the SSU processome.

Its subcellular location is the nucleus. It catalyses the reaction ATP + H2O = ADP + phosphate + H(+). ATP-dependent rRNA helicase required for pre-ribosomal RNA processing. Involved in the maturation of the 35S-pre-rRNA and to its cleavage to mature 18S rRNA. The protein is ATP-dependent rRNA helicase RRP3 of Ajellomyces capsulatus (strain NAm1 / WU24) (Darling's disease fungus).